The chain runs to 402 residues: Mediator of RNA polymerase II transcription subunit 27 (402 aa).

Positions 1–23 (MQTLHQSQLLQNPAEAANNQSES) are enriched in polar residues. The segment at 1–30 (MQTLHQSQLLQNPAEAANNQSESDAPPKQV) is disordered. Positions 28-49 (KQVAQAMERLNQAARVIADIRL) form a coiled coil.

This sequence belongs to the Mediator complex subunit 27 family. Component of the Mediator complex.

It is found in the nucleus. Component of the Mediator complex, a coactivator involved in the regulated transcription of nearly all RNA polymerase II-dependent genes. Mediator functions as a bridge to convey information from gene-specific regulatory proteins to the basal RNA polymerase II transcription machinery. The Mediator complex, having a compact conformation in its free form, is recruited to promoters by direct interactions with regulatory proteins and serves for the assembly of a functional preinitiation complex with RNA polymerase II and the general transcription factors. The sequence is that of Mediator of RNA polymerase II transcription subunit 27 (MED27) from Arabidopsis thaliana (Mouse-ear cress).